The following is a 185-amino-acid chain: Protein GrpE (185 aa).

The tract at residues 1–40 (MSEEKKDEILEQETVETKEEIKTEEAEQKTESLEEKVARL) is disordered.

It belongs to the GrpE family. Homodimer.

Its subcellular location is the cytoplasm. In terms of biological role, participates actively in the response to hyperosmotic and heat shock by preventing the aggregation of stress-denatured proteins, in association with DnaK and GrpE. It is the nucleotide exchange factor for DnaK and may function as a thermosensor. Unfolded proteins bind initially to DnaJ; upon interaction with the DnaJ-bound protein, DnaK hydrolyzes its bound ATP, resulting in the formation of a stable complex. GrpE releases ADP from DnaK; ATP binding to DnaK triggers the release of the substrate protein, thus completing the reaction cycle. Several rounds of ATP-dependent interactions between DnaJ, DnaK and GrpE are required for fully efficient folding. The polypeptide is Protein GrpE (Aliarcobacter butzleri (strain RM4018) (Arcobacter butzleri)).